The primary structure comprises 190 residues: Segregation and condensation protein B (190 aa).

This sequence belongs to the ScpB family. As to quaternary structure, homodimer. Homodimerization may be required to stabilize the binding of ScpA to the Smc head domains. Component of a cohesin-like complex composed of ScpA, ScpB and the Smc homodimer, in which ScpA and ScpB bind to the head domain of Smc. The presence of the three proteins is required for the association of the complex with DNA.

It localises to the cytoplasm. Participates in chromosomal partition during cell division. May act via the formation of a condensin-like complex containing Smc and ScpA that pull DNA away from mid-cell into both cell halves. The protein is Segregation and condensation protein B of Bacillus thuringiensis subsp. konkukian (strain 97-27).